A 287-amino-acid polypeptide reads, in one-letter code: ATP synthase gamma chain (287 aa).

It belongs to the ATPase gamma chain family. In terms of assembly, F-type ATPases have 2 components, CF(1) - the catalytic core - and CF(0) - the membrane proton channel. CF(1) has five subunits: alpha(3), beta(3), gamma(1), delta(1), epsilon(1). CF(0) has three main subunits: a, b and c.

The protein localises to the cell inner membrane. Produces ATP from ADP in the presence of a proton gradient across the membrane. The gamma chain is believed to be important in regulating ATPase activity and the flow of protons through the CF(0) complex. This is ATP synthase gamma chain from Parabacteroides distasonis (strain ATCC 8503 / DSM 20701 / CIP 104284 / JCM 5825 / NCTC 11152).